A 296-amino-acid chain; its full sequence is ATP synthase gamma chain (296 aa).

The protein belongs to the ATPase gamma chain family. F-type ATPases have 2 components, CF(1) - the catalytic core - and CF(0) - the membrane proton channel. CF(1) has five subunits: alpha(3), beta(3), gamma(1), delta(1), epsilon(1). CF(0) has three main subunits: a, b and c.

It localises to the cell inner membrane. Functionally, produces ATP from ADP in the presence of a proton gradient across the membrane. The gamma chain is believed to be important in regulating ATPase activity and the flow of protons through the CF(0) complex. The chain is ATP synthase gamma chain from Methylorubrum extorquens (strain PA1) (Methylobacterium extorquens).